A 358-amino-acid polypeptide reads, in one-letter code: MAAVLKPVLLGLRDAPVHGSPTGPGAWTASKLGGIPDALPTVAAPRPVCQRCGQPLALVVQVYCPLEGSPFHRLLHVFACACPGCSTGGARSWKVFRSQCLQVPEREAQDAQKQGNSLAAEDWCEGADDWGSDTEEGPSPQFTLDFGNDASSAKDVDWTARLQDLRLQDAVLGAAHPVPPGLPLFLPYYICVADEDDYRDFVNLDHAHSLLRDYQQREGIAMDQLLSQSLPNDGDEKYEKTIIKSGDQTFYKFMKRIAACQEQILRYSWSGEPLFLTCPTSEVTELPACSQCGGQRIFEFQLMPALVSMLKSANLGLSVEFGTILVYTCEKSCWPPNHQTPMEEFCIIQEDPDELLFK.

A2 carries the N-acetylalanine modification. S20 bears the Phosphoserine mark. Phosphothreonine is present on T22.

Higher expression in lung, colon, mammary gland, cervix, stomach and small intestine.

Functionally, over-expression suppresses AP1, CREB, NFAT, and NF-kB transcriptional activation, and delays cell cycle progression at S phase. In Homo sapiens (Human), this protein is Programmed cell death protein 2-like (PDCD2L).